The primary structure comprises 301 residues: Phosphatidylserine decarboxylase proenzyme (301 aa).

Residues D117, H173, and S260 each act as charge relay system; for autoendoproteolytic cleavage activity in the active site. S260 (schiff-base intermediate with substrate; via pyruvic acid; for decarboxylase activity) is an active-site residue. S260 is modified (pyruvic acid (Ser); by autocatalysis).

It belongs to the phosphatidylserine decarboxylase family. PSD-B subfamily. Prokaryotic type II sub-subfamily. In terms of assembly, heterodimer of a large membrane-associated beta subunit and a small pyruvoyl-containing alpha subunit. The cofactor is pyruvate. Is synthesized initially as an inactive proenzyme. Formation of the active enzyme involves a self-maturation process in which the active site pyruvoyl group is generated from an internal serine residue via an autocatalytic post-translational modification. Two non-identical subunits are generated from the proenzyme in this reaction, and the pyruvate is formed at the N-terminus of the alpha chain, which is derived from the carboxyl end of the proenzyme. The autoendoproteolytic cleavage occurs by a canonical serine protease mechanism, in which the side chain hydroxyl group of the serine supplies its oxygen atom to form the C-terminus of the beta chain, while the remainder of the serine residue undergoes an oxidative deamination to produce ammonia and the pyruvoyl prosthetic group on the alpha chain. During this reaction, the Ser that is part of the protease active site of the proenzyme becomes the pyruvoyl prosthetic group, which constitutes an essential element of the active site of the mature decarboxylase.

It is found in the cell membrane. The enzyme catalyses a 1,2-diacyl-sn-glycero-3-phospho-L-serine + H(+) = a 1,2-diacyl-sn-glycero-3-phosphoethanolamine + CO2. The protein operates within phospholipid metabolism; phosphatidylethanolamine biosynthesis; phosphatidylethanolamine from CDP-diacylglycerol: step 2/2. Catalyzes the formation of phosphatidylethanolamine (PtdEtn) from phosphatidylserine (PtdSer). This is Phosphatidylserine decarboxylase proenzyme from Chlamydia trachomatis serovar L2b (strain UCH-1/proctitis).